Here is a 273-residue protein sequence, read N- to C-terminus: ATP synthase subunit a (273 aa).

7 helical membrane passes run 41-61 (ILNIDSIFFTLLLGIIFLLIF), 101-121 (LIAPLALTIFIWIFLMNLMDL), 122-142 (LAVDMLPYIAMYILHIPALRV), 143-163 (VPSADINITLSLALGVFILII), 183-203 (PFNHLIFIPLNFILESVSLLS), 221-241 (LVFILIAGLLPWWSQWIISVP), and 247-267 (IIVITLQAFIFMVLTVVYIAM).

This sequence belongs to the ATPase A chain family. F-type ATPases have 2 components, CF(1) - the catalytic core - and CF(0) - the membrane proton channel. CF(1) has five subunits: alpha(3), beta(3), gamma(1), delta(1), epsilon(1). CF(0) has three main subunits: a(1), b(2) and c(9-12). The alpha and beta chains form an alternating ring which encloses part of the gamma chain. CF(1) is attached to CF(0) by a central stalk formed by the gamma and epsilon chains, while a peripheral stalk is formed by the delta and b chains.

It localises to the cell membrane. Key component of the proton channel; it plays a direct role in the translocation of protons across the membrane. This chain is ATP synthase subunit a, found in Baumannia cicadellinicola subsp. Homalodisca coagulata.